A 59-amino-acid polypeptide reads, in one-letter code: Gallinacin-14 (59 aa).

Residues Met1–Pro18 form the signal peptide. Disulfide bonds link Cys25-Cys54, Cys32-Cys47, and Cys37-Cys55.

Belongs to the beta-defensin family.

The protein localises to the secreted. It is found in the cytoplasmic granule. Has bactericidal activity. The protein is Gallinacin-14 (GAL14) of Gallus gallus (Chicken).